We begin with the raw amino-acid sequence, 383 residues long: Acetylornithine deacetylase (383 aa).

Zn(2+) is bound at residue His80. Asp82 is a catalytic residue. Residue Asp112 participates in Zn(2+) binding. Residue Glu144 is part of the active site. The Zn(2+) site is built by Glu145, Glu169, and His355.

Belongs to the peptidase M20A family. ArgE subfamily. Homodimer. Zn(2+) serves as cofactor. Requires Co(2+) as cofactor. It depends on glutathione as a cofactor.

Its subcellular location is the cytoplasm. The enzyme catalyses N(2)-acetyl-L-ornithine + H2O = L-ornithine + acetate. The protein operates within amino-acid biosynthesis; L-arginine biosynthesis; L-ornithine from N(2)-acetyl-L-ornithine (linear): step 1/1. Catalyzes the hydrolysis of the amide bond of N(2)-acetylated L-amino acids. Cleaves the acetyl group from N-acetyl-L-ornithine to form L-ornithine, an intermediate in L-arginine biosynthesis pathway, and a branchpoint in the synthesis of polyamines. The chain is Acetylornithine deacetylase from Klebsiella pneumoniae (strain 342).